The primary structure comprises 552 residues: MWNETWNEITNELIQLSREPESEIPRITAEQRAYLKLVRPAAFVEGIAVLRVPHSRAKETIETHLGQAITSVLSRRMGRPFTVAVTVDPTLDVIQDLPHDVPEQHIVQHHVPEHPHYSPVSQGYPPHYAPEQSEYNTEYSDEYPSGWATYHVQTPQPSQSSQSAQQQPAQRMPDRRRYAEQQQVPQRSEEPVMGQRRAREKPAHDPDRNGSLNPRYTFDTYVVSDSNKLPWSAAWAVAEKPARAYNPLFIWGDSGLGKTHLMHAIGNYAQELDPKLKVKYVSSEEFTNDYINSVRDDRQEAFKRRYRDLDILMVDDIQFLQGKEGTQEEFFHTFNALQQADKQIVLSSDRPPKQLTTLEDRLRTRFQSGLIADIYPPDLETRIAILLNKASAEGITADRDVLELIASRFNASIRELEGAFIRVSAYASLNEAPINMATAQEALRDMMPEQADIEITAGMIMSVTAEYFHIDVDTLKGSGKSRSVAHPRQLAMYLCRELTDLSLPKIGEHFGGKDHTTVMYAYRKIGKEITEKRDTYDEIQQLTQQIKSSDRA.

The domain I, interacts with DnaA modulators stretch occupies residues methionine 1–threonine 90. A domain II region spans residues threonine 90–glycine 210. The interval glutamate 113–asparagine 213 is disordered. Residues proline 155 to glutamine 170 are compositionally biased toward low complexity. The tract at residues serine 211–alanine 427 is domain III, AAA+ region. Positions 255, 257, 258, and 259 each coordinate ATP. The tract at residues serine 428–alanine 552 is domain IV, binds dsDNA.

This sequence belongs to the DnaA family. Oligomerizes as a right-handed, spiral filament on DNA at oriC.

It is found in the cytoplasm. Functionally, plays an essential role in the initiation and regulation of chromosomal replication. ATP-DnaA binds to the origin of replication (oriC) to initiate formation of the DNA replication initiation complex once per cell cycle. Binds the DnaA box (a 9 base pair repeat at the origin) and separates the double-stranded (ds)DNA. Forms a right-handed helical filament on oriC DNA; dsDNA binds to the exterior of the filament while single-stranded (ss)DNA is stabiized in the filament's interior. The ATP-DnaA-oriC complex binds and stabilizes one strand of the AT-rich DNA unwinding element (DUE), permitting loading of DNA polymerase. After initiation quickly degrades to an ADP-DnaA complex that is not apt for DNA replication. Binds acidic phospholipids. The polypeptide is Chromosomal replication initiator protein DnaA (Corynebacterium diphtheriae (strain ATCC 700971 / NCTC 13129 / Biotype gravis)).